The following is a 198-amino-acid chain: Na(+)-translocating NADH-quinone reductase subunit E (198 aa).

Transmembrane regions (helical) follow at residues 11 to 31 (AVFV…FLAV), 35 to 55 (VSTA…AVPI), 77 to 97 (FLNF…LEMI), 110 to 130 (GIFL…SFMV), 140 to 160 (IVYG…MAGI), and 176 to 196 (LGIT…FSGV).

The protein belongs to the NqrDE/RnfAE family. As to quaternary structure, composed of six subunits; NqrA, NqrB, NqrC, NqrD, NqrE and NqrF.

Its subcellular location is the cell inner membrane. It catalyses the reaction a ubiquinone + n Na(+)(in) + NADH + H(+) = a ubiquinol + n Na(+)(out) + NAD(+). NQR complex catalyzes the reduction of ubiquinone-1 to ubiquinol by two successive reactions, coupled with the transport of Na(+) ions from the cytoplasm to the periplasm. NqrA to NqrE are probably involved in the second step, the conversion of ubisemiquinone to ubiquinol. The sequence is that of Na(+)-translocating NADH-quinone reductase subunit E from Klebsiella pneumoniae subsp. pneumoniae (strain ATCC 700721 / MGH 78578).